The chain runs to 579 residues: CTP synthase (579 aa).

Residues 1–281 (MPALRKHPQT…DAYVVRRLNL (281 aa)) form an amidoligase domain region. Residue serine 23 participates in CTP binding. UTP is bound at residue serine 23. ATP-binding positions include 24 to 29 (SLGKGL) and aspartate 81. The Mg(2+) site is built by aspartate 81 and glutamate 155. CTP-binding positions include 162–164 (DIE), 202–207 (KTKPTQ), and lysine 238. UTP contacts are provided by residues 202–207 (KTKPTQ) and lysine 238. Positions 306 to 554 (RIALVGKYID…IGAALDYKAA (249 aa)) constitute a Glutamine amidotransferase type-1 domain. Position 369 (glycine 369) interacts with L-glutamine. Cysteine 396 functions as the Nucleophile; for glutamine hydrolysis in the catalytic mechanism. Residues 397 to 400 (LGLQ), glutamate 419, and arginine 480 contribute to the L-glutamine site. Active-site residues include histidine 527 and glutamate 529.

This sequence belongs to the CTP synthase family. As to quaternary structure, homotetramer.

The enzyme catalyses UTP + L-glutamine + ATP + H2O = CTP + L-glutamate + ADP + phosphate + 2 H(+). It carries out the reaction L-glutamine + H2O = L-glutamate + NH4(+). The catalysed reaction is UTP + NH4(+) + ATP = CTP + ADP + phosphate + 2 H(+). Its pathway is pyrimidine metabolism; CTP biosynthesis via de novo pathway; CTP from UDP: step 2/2. With respect to regulation, allosterically activated by GTP, when glutamine is the substrate; GTP has no effect on the reaction when ammonia is the substrate. The allosteric effector GTP functions by stabilizing the protein conformation that binds the tetrahedral intermediate(s) formed during glutamine hydrolysis. Inhibited by the product CTP, via allosteric rather than competitive inhibition. In terms of biological role, catalyzes the ATP-dependent amination of UTP to CTP with either L-glutamine or ammonia as the source of nitrogen. Regulates intracellular CTP levels through interactions with the four ribonucleotide triphosphates. This Mycobacterium sp. (strain KMS) protein is CTP synthase.